Here is an 840-residue protein sequence, read N- to C-terminus: Phosphatidylinositol-glycan-specific phospholipase D (840 aa).

The N-terminal stretch at 1-23 is a signal peptide; the sequence is MSAFRLWPGLLIMLGSLCHRGSP. Residues Asn94, Asn271, Asn292, Asn307, and Asn321 are each glycosylated (N-linked (GlcNAc...) asparagine). FG-GAP repeat units follow at residues 367–428, 436–497, 499–559, 563–623, 633–693, 704–770, and 788–840; these read SPLA…GLPP, EAHR…GGMS, SPNI…LSDK, NVEA…SLGR, QSWF…GATR, LLLS…TLGD, and QYVL…LGSD. 5 N-linked (GlcNAc...) asparagine glycosylation sites follow: Asn501, Asn568, Asn591, Asn604, and Asn659.

It belongs to the GPLD1 family. Monomer.

It is found in the secreted. The enzyme catalyses a 6-(alpha-D-glucosaminyl)-1-(1,2-diacyl-sn-glycero-3-phospho)-1D-myo-inositol + H2O = 6-(alpha-D-glucosaminyl)-1D-myo-inositol + a 1,2-diacyl-sn-glycero-3-phosphate + H(+). Functionally, this protein hydrolyzes the inositol phosphate linkage in proteins anchored by phosphatidylinositol glycans (GPI-anchor) thus releasing these proteins from the membrane. The sequence is that of Phosphatidylinositol-glycan-specific phospholipase D (GPLD1) from Homo sapiens (Human).